Here is a 259-residue protein sequence, read N- to C-terminus: Formate channel BtFdhC (259 aa).

Residues 1 to 26 (MAFHKPEQIAELVIEAGVQKVSQTLP) lie on the Cytoplasmic side of the membrane. A helical transmembrane segment spans residues 27–47 (AMLILGFLGGAFISLGFLLNI). Residues 48–66 (RVLGNLPERWGSLVNVLGG) are Periplasmic-facing. The chain crosses the membrane as a helical span at residues 67 to 97 (AVFPVGLMLVVLAGGELITGNMMSLSMALYA). The Cytoplasmic portion of the chain corresponds to 98 to 108 (KKITLVSVLNN). The helical transmembrane segment at 109-130 (WVWITFMNFVGAIFVAYCFGHL) threads the bilayer. Residues 131–157 (GGLTEGDYLNKTVAIAEGKLHESFGRT) lie on the Periplasmic side of the membrane. A helical membrane pass occupies residues 158 to 176 (LILAIGCNWLVCLALWLAY). At 177 to 187 (GTSDFVGKIIG) the chain is on the cytoplasmic side. The helical transmembrane segment at 188 to 216 (IWIPIMAFVVIGFQQVVANMFVISAVIFA) threads the bilayer. At 217 to 227 (GHLTWMDLARN) the chain is on the periplasmic side. A helical transmembrane segment spans residues 228–250 (FVPVFIGNVIGGAGFVGFAYFAC). The Cytoplasmic portion of the chain corresponds to 251 to 259 (YQKQHSNMK).

It belongs to the FNT transporter (TC 1.A.16) family.

Its subcellular location is the cell inner membrane. The enzyme catalyses formate(in) = formate(out). Acts as a formate transporter. This Bacillus thuringiensis protein is Formate channel BtFdhC.